The following is a 360-amino-acid chain: Metalloendoproteinase 5-MMP (360 aa).

An N-terminal signal peptide occupies residues 1-20 (MRTLLLTILIFFFTVNPISA). A propeptide spans 21–142 (KFYTNVSSIP…GGKILRTTEK (122 aa)) (activation peptide). N-linked (GlcNAc...) asparagine glycans are attached at residues Asn-25, Asn-36, and Asn-78. Positions 117-124 (PRCGNPDL) match the Cysteine switch motif. Cys-119 contacts Zn(2+). N-linked (GlcNAc...) asparagine glycans are attached at residues Asn-168 and Asn-191. His-270 provides a ligand contact to Zn(2+). The active site involves Glu-271. Positions 274 and 280 each coordinate Zn(2+). Residues 312–336 (LYGGNPNGDGGGSKPSRESQSTGGD) are disordered. A lipid anchor (GPI-anchor amidated serine) is attached at Ser-337. Positions 338 to 360 (VRRWRGWMISLSSIATCIFLISV) are cleaved as a propeptide — removed in mature form.

This sequence belongs to the peptidase M10A family. Matrix metalloproteinases (MMPs) subfamily. Zn(2+) is required as a cofactor. In terms of tissue distribution, mostly expressed in leaves, roots and stems, and, to a lower extent, in flowers.

It is found in the cell membrane. Its activity is regulated as follows. Repressed by acetohydroxamic acid (AHA). In terms of biological role, matrix metalloproteinases (MMPs) or matrixins may play a role in the degradation and remodeling of the extracellular matrix (ECM) during development or in response to stresses. Active on Mca-KESAbuNLFVLKDpaR-NH(2) (QF75) and, to some extent, on McaPLGLDpaAR-NH(2) (QF24), myelin basic protein (MBP) and beta-casein. In Arabidopsis thaliana (Mouse-ear cress), this protein is Metalloendoproteinase 5-MMP.